A 725-amino-acid polypeptide reads, in one-letter code: Phosphoribosylformylglycinamidine synthase subunit PurL (725 aa).

His-42 is a catalytic residue. Residues Tyr-45 and Lys-84 each coordinate ATP. Glu-86 contributes to the Mg(2+) binding site. Substrate contacts are provided by residues 87–90 and Arg-109; that span reads SHNH. His-88 acts as the Proton acceptor in catalysis. Position 110 (Asp-110) interacts with Mg(2+). Gln-237 provides a ligand contact to substrate. Asp-265 contributes to the Mg(2+) binding site. Substrate is bound at residue 309–311; that stretch reads ESQ. Residues Asp-491 and Gly-528 each contribute to the ATP site. Asn-529 contacts Mg(2+). Ser-531 lines the substrate pocket.

This sequence belongs to the FGAMS family. As to quaternary structure, monomer. Part of the FGAM synthase complex composed of 1 PurL, 1 PurQ and 2 PurS subunits.

Its subcellular location is the cytoplasm. The enzyme catalyses N(2)-formyl-N(1)-(5-phospho-beta-D-ribosyl)glycinamide + L-glutamine + ATP + H2O = 2-formamido-N(1)-(5-O-phospho-beta-D-ribosyl)acetamidine + L-glutamate + ADP + phosphate + H(+). Its pathway is purine metabolism; IMP biosynthesis via de novo pathway; 5-amino-1-(5-phospho-D-ribosyl)imidazole from N(2)-formyl-N(1)-(5-phospho-D-ribosyl)glycinamide: step 1/2. Its function is as follows. Part of the phosphoribosylformylglycinamidine synthase complex involved in the purines biosynthetic pathway. Catalyzes the ATP-dependent conversion of formylglycinamide ribonucleotide (FGAR) and glutamine to yield formylglycinamidine ribonucleotide (FGAM) and glutamate. The FGAM synthase complex is composed of three subunits. PurQ produces an ammonia molecule by converting glutamine to glutamate. PurL transfers the ammonia molecule to FGAR to form FGAM in an ATP-dependent manner. PurS interacts with PurQ and PurL and is thought to assist in the transfer of the ammonia molecule from PurQ to PurL. This Campylobacter lari (strain RM2100 / D67 / ATCC BAA-1060) protein is Phosphoribosylformylglycinamidine synthase subunit PurL.